Consider the following 318-residue polypeptide: Ferrochelatase (318 aa).

2 residues coordinate Fe cation: His194 and Glu275.

The protein belongs to the ferrochelatase family.

It localises to the cytoplasm. It catalyses the reaction heme b + 2 H(+) = protoporphyrin IX + Fe(2+). Its pathway is porphyrin-containing compound metabolism; protoheme biosynthesis; protoheme from protoporphyrin-IX: step 1/1. Its function is as follows. Catalyzes the ferrous insertion into protoporphyrin IX. This Xanthomonas axonopodis pv. citri (strain 306) protein is Ferrochelatase.